The sequence spans 170 residues: Cytidine diphosphoramidate kinase (170 aa).

This sequence belongs to the APS kinase family.

The catalysed reaction is cytidine 5'-diphosphoramidate + ATP = cytidine 3'-phospho-5'-diphosphoramidate + ADP + H(+). It participates in capsule biogenesis; capsule polysaccharide biosynthesis. Involved in the biosynthesis of the O-methyl phosphoramidate (MeOPN) group found on the capsular polysaccharide (CPS) of C.jejuni. Catalyzes the ATP-dependent phosphorylation of cytidine diphosphoramidate (CDP-NH(2)) to form cytidine 3'-phosphate 5'-diphosphoramidate. Can also use other substrates such as the corresponding adenine and uridine diphosphoramidate derivatives or cytidine diphosphoramidate analogs, with lower efficiency. This chain is Cytidine diphosphoramidate kinase, found in Campylobacter jejuni subsp. jejuni serotype O:2 (strain ATCC 700819 / NCTC 11168).